A 334-amino-acid polypeptide reads, in one-letter code: Aspartate carbamoyltransferase catalytic subunit (334 aa).

Residues R71 and T72 each contribute to the carbamoyl phosphate site. K99 lines the L-aspartate pocket. Carbamoyl phosphate is bound by residues R121, H151, and Q154. 2 residues coordinate L-aspartate: R184 and R239. Residues G280 and P281 each contribute to the carbamoyl phosphate site.

The protein belongs to the aspartate/ornithine carbamoyltransferase superfamily. ATCase family. In terms of assembly, heterododecamer (2C3:3R2) of six catalytic PyrB chains organized as two trimers (C3), and six regulatory PyrI chains organized as three dimers (R2).

The enzyme catalyses carbamoyl phosphate + L-aspartate = N-carbamoyl-L-aspartate + phosphate + H(+). It participates in pyrimidine metabolism; UMP biosynthesis via de novo pathway; (S)-dihydroorotate from bicarbonate: step 2/3. In terms of biological role, catalyzes the condensation of carbamoyl phosphate and aspartate to form carbamoyl aspartate and inorganic phosphate, the committed step in the de novo pyrimidine nucleotide biosynthesis pathway. The chain is Aspartate carbamoyltransferase catalytic subunit from Pseudomonas putida (strain ATCC 47054 / DSM 6125 / CFBP 8728 / NCIMB 11950 / KT2440).